Here is a 1770-residue protein sequence, read N- to C-terminus: Transposon Ty2-GR1 Gag-Pol polyprotein (1770 aa).

Polar residues-rich tracts occupy residues 1–11 (MESQQLHQNPH), 19–39 (ASVT…SASN), and 49–60 (KVNSQQETTPGT). Disordered regions lie at residues 1-86 (MESQ…GQYQ) and 360-453 (HSEY…LPDH). Positions 295-397 (ENNINVSDRL…SSKPRAAKAH (103 aa)) are RNA-binding. The span at 369-381 (TSPNTTNTKVTTR) shows a compositional bias: low complexity. Residues 399-408 (IATSSKFSRV) show a composition bias toward polar residues. Asp-457 acts as the For protease activity; shared with dimeric partner in catalysis. The interval 579–636 (NVNKSKSVNKYPYPLIHRMLGHANFRSIQKSLKKNAVTYLKESDIEWSNASTYQCPDC) is integrase-type zinc finger-like. In terms of domain architecture, Integrase catalytic spans 656 to 831 (ESYEPFQYLH…AGLDITTILP (176 aa)). Positions 667 and 732 each coordinate Mg(2+). 4 disordered regions span residues 1004-1034 (MGGT…STNE), 1059-1135 (TEEP…KSSK), 1146-1165 (LPLP…VSKD), and 1170-1205 (HSRQ…TEIE). 2 stretches are compositionally biased toward polar residues: residues 1009-1034 (ESDT…STNE) and 1065-1082 (QRNS…STPS). Basic and acidic residues predominate over residues 1151-1165 (LTHKSPTDTSDVSKD). Positions 1193–1227 (KKRSLEDNETEIEVSRDTWNNKNMRSLEPPRSKKR) match the Bipartite nuclear localization signal motif. The Reverse transcriptase Ty1/copia-type domain maps to 1353-1491 (NDYYITQLDI…DILGLEIKYQ (139 aa)). Mg(2+)-binding residues include Asp-1361, Asp-1442, Asp-1443, Asp-1625, Glu-1667, and Asp-1700. The RNase H Ty1/copia-type domain occupies 1625-1767 (DASYGNQPYY…IKTFKLLTNK (143 aa)).

In terms of assembly, the capsid protein forms a homotrimer, from which the VLPs are assembled. The protease is a homodimer, whose active site consists of two apposed aspartic acid residues. Initially, virus-like particles (VLPs) are composed of the structural unprocessed proteins Gag and Gag-Pol, and also contain the host initiator methionine tRNA (tRNA(i)-Met) which serves as a primer for minus-strand DNA synthesis, and a dimer of genomic Ty RNA. Processing of the polyproteins occurs within the particle and proceeds by an ordered pathway, called maturation. First, the protease (PR) is released by autocatalytic cleavage of the Gag-Pol polyprotein, and this cleavage is a prerequisite for subsequent processing at the remaining sites to release the mature structural and catalytic proteins. Maturation takes place prior to the RT reaction and is required to produce transposition-competent VLPs.

It localises to the cytoplasm. It is found in the nucleus. It catalyses the reaction DNA(n) + a 2'-deoxyribonucleoside 5'-triphosphate = DNA(n+1) + diphosphate. It carries out the reaction Endonucleolytic cleavage to 5'-phosphomonoester.. Its function is as follows. Capsid protein (CA) is the structural component of the virus-like particle (VLP), forming the shell that encapsulates the retrotransposons dimeric RNA genome. The particles are assembled from trimer-clustered units and there are holes in the capsid shells that allow for the diffusion of macromolecules. CA also has nucleocapsid-like chaperone activity, promoting primer tRNA(i)-Met annealing to the multipartite primer-binding site (PBS), dimerization of Ty2 RNA and initiation of reverse transcription. Functionally, the aspartyl protease (PR) mediates the proteolytic cleavages of the Gag and Gag-Pol polyproteins after assembly of the VLP. Reverse transcriptase/ribonuclease H (RT) is a multifunctional enzyme that catalyzes the conversion of the retro-elements RNA genome into dsDNA within the VLP. The enzyme displays a DNA polymerase activity that can copy either DNA or RNA templates, and a ribonuclease H (RNase H) activity that cleaves the RNA strand of RNA-DNA heteroduplexes during plus-strand synthesis and hydrolyzes RNA primers. The conversion leads to a linear dsDNA copy of the retrotransposon that includes long terminal repeats (LTRs) at both ends. In terms of biological role, integrase (IN) targets the VLP to the nucleus, where a subparticle preintegration complex (PIC) containing at least integrase and the newly synthesized dsDNA copy of the retrotransposon must transit the nuclear membrane. Once in the nucleus, integrase performs the integration of the dsDNA into the host genome. The polypeptide is Transposon Ty2-GR1 Gag-Pol polyprotein (TY2B-GR1) (Saccharomyces cerevisiae (strain ATCC 204508 / S288c) (Baker's yeast)).